The following is a 262-amino-acid chain: Acyl-[acyl-carrier-protein]--UDP-N-acetylglucosamine O-acyltransferase (262 aa).

The protein belongs to the transferase hexapeptide repeat family. LpxA subfamily. In terms of assembly, homotrimer.

It localises to the cytoplasm. It catalyses the reaction a (3R)-hydroxyacyl-[ACP] + UDP-N-acetyl-alpha-D-glucosamine = a UDP-3-O-[(3R)-3-hydroxyacyl]-N-acetyl-alpha-D-glucosamine + holo-[ACP]. The protein operates within glycolipid biosynthesis; lipid IV(A) biosynthesis; lipid IV(A) from (3R)-3-hydroxytetradecanoyl-[acyl-carrier-protein] and UDP-N-acetyl-alpha-D-glucosamine: step 1/6. In terms of biological role, involved in the biosynthesis of lipid A, a phosphorylated glycolipid that anchors the lipopolysaccharide to the outer membrane of the cell. The protein is Acyl-[acyl-carrier-protein]--UDP-N-acetylglucosamine O-acyltransferase of Aliivibrio fischeri (strain ATCC 700601 / ES114) (Vibrio fischeri).